The following is a 35-amino-acid chain: U1-theraphotoxin-Hs1f (35 aa).

3 disulfide bridges follow: Cys3-Cys16, Cys7-Cys27, and Cys21-Cys32.

Belongs to the neurotoxin 12 (Hwtx-2) family. 02 (Hwtx-2) subfamily. As to expression, expressed by the venom gland.

It localises to the secreted. Functionally, blocks neuromuscular transmission. Acts cooperatively to potentiate the activity of huwentoxin-I. Paralyzes locusts and kills mice following intracerebroventricular injection. This chain is U1-theraphotoxin-Hs1f, found in Cyriopagopus schmidti (Chinese bird spider).